Reading from the N-terminus, the 300-residue chain is MGPYLSQPKKDKTTTTGQGKSVIFAASEMQGWRNTMEDAHIHKPDVIQDVSIFGVFDGHGGREVAQFVEKHFIDELLKNKNFKEQKFEEALKETFLKMDELLVTPEGQKELNQYKATDTDESYAGCTANVALIYKNTLYVANAGDSRTVLCRNNANYDMSVDHKPDNPEEKSRIERAGGFVSDGRVNGNLNLSRALGDLEYKRDSKLRVNEQLIIAIPDVKKVELGPQDKFLLLGCDGVFETLNHMDLLKQVNSTLGQAQVTEELLRKAAEDLLDQLLAPDTSQGTGCDNMTTILVYLKK.

Residues 23 to 298 (IFAASEMQGW…DNMTTILVYL (276 aa)) enclose the PPM-type phosphatase domain. The Mn(2+) site is built by D57, G58, D237, and D289.

This sequence belongs to the PP2C family. The cofactor is Mg(2+). Requires Mn(2+) as cofactor.

The protein resides in the membrane. It carries out the reaction O-phospho-L-seryl-[protein] + H2O = L-seryl-[protein] + phosphate. The catalysed reaction is O-phospho-L-threonyl-[protein] + H2O = L-threonyl-[protein] + phosphate. Its function is as follows. Enzyme with a broad specificity. This chain is Probable protein phosphatase 2C 2, found in Paramecium tetraurelia.